The chain runs to 100 residues: Large ribosomal subunit protein uL23 (100 aa).

Belongs to the universal ribosomal protein uL23 family. Part of the 50S ribosomal subunit. Contacts protein L29, and trigger factor when it is bound to the ribosome.

One of the early assembly proteins it binds 23S rRNA. One of the proteins that surrounds the polypeptide exit tunnel on the outside of the ribosome. Forms the main docking site for trigger factor binding to the ribosome. This chain is Large ribosomal subunit protein uL23, found in Mycobacterium sp. (strain JLS).